The primary structure comprises 285 residues: 3-methyl-2-oxobutanoate hydroxymethyltransferase (285 aa).

Residues 1–23 (MSEHNVYGAAQPAQPAQPAQPRT) form a disordered region. The segment covering 9-21 (AAQPAQPAQPAQP) has biased composition (low complexity). Positions 66 and 105 each coordinate Mg(2+). 3-methyl-2-oxobutanoate is bound by residues 66 to 67 (DS), D105, and K135. Residue E137 coordinates Mg(2+). E203 acts as the Proton acceptor in catalysis.

The protein belongs to the PanB family. As to quaternary structure, homodecamer; pentamer of dimers. Requires Mg(2+) as cofactor.

Its subcellular location is the cytoplasm. The enzyme catalyses 3-methyl-2-oxobutanoate + (6R)-5,10-methylene-5,6,7,8-tetrahydrofolate + H2O = 2-dehydropantoate + (6S)-5,6,7,8-tetrahydrofolate. It participates in cofactor biosynthesis; (R)-pantothenate biosynthesis; (R)-pantoate from 3-methyl-2-oxobutanoate: step 1/2. Its function is as follows. Catalyzes the reversible reaction in which hydroxymethyl group from 5,10-methylenetetrahydrofolate is transferred onto alpha-ketoisovalerate to form ketopantoate. The chain is 3-methyl-2-oxobutanoate hydroxymethyltransferase from Mycobacterium avium (strain 104).